The following is a 218-amino-acid chain: Fucoxanthin-chlorophyll a-c binding protein, chloroplastic (218 aa).

Residues 1 to 36 (MFYSAAVAALMVGSASAFLAPAQFNSVAKSSGALSM) constitute a chloroplast transit peptide.

The protein belongs to the fucoxanthin chlorophyll protein family. The LHC complex of chromophytic algae is composed of fucoxanthin, chlorophyll A and C bound non-covalently by fucoxanthin chlorophyll proteins (FCPs). The ratio of pigments in this LHC is; fucoxanthin: chlorophyll C: chlorophyll A; (0.6-1): (0.1-0.3): (1).

The protein localises to the plastid. It localises to the chloroplast thylakoid membrane. In terms of biological role, the light-harvesting complex (LHC) functions as a light receptor, it captures and delivers excitation energy to photosystems with which it is closely associated. Energy is transferred from the carotenoid and chlorophyll C (or B) to chlorophyll A and the photosynthetic reaction centers where it is used to synthesize ATP and reducing power. The polypeptide is Fucoxanthin-chlorophyll a-c binding protein, chloroplastic (Chattonella marina var. antiqua (Red tide flagellate)).